The primary structure comprises 118 residues: Large ribosomal subunit protein uL18 (118 aa).

A disordered region spans residues 1-24; that stretch reads MISKPDKNKIRQKRHRRVRGKLSG. Residues 10 to 20 show a composition bias toward basic residues; that stretch reads IRQKRHRRVRG.

This sequence belongs to the universal ribosomal protein uL18 family. As to quaternary structure, part of the 50S ribosomal subunit; part of the 5S rRNA/L5/L18/L25 subcomplex. Contacts the 5S and 23S rRNAs.

This is one of the proteins that bind and probably mediate the attachment of the 5S RNA into the large ribosomal subunit, where it forms part of the central protuberance. In Streptococcus mutans serotype c (strain ATCC 700610 / UA159), this protein is Large ribosomal subunit protein uL18.